Here is a 531-residue protein sequence, read N- to C-terminus: RCC1 and BTB domain-containing protein 1 (531 aa).

6 RCC1 repeats span residues asparagine 40–threonine 91, aspartate 93–alanine 145, glycine 147–aspartate 198, serine 199–aspartate 250, glycine 252–threonine 302, and glycine 304–valine 356. 2 consecutive BTB domains span residues alanine 370–proline 437 and glutamate 470–leucine 499.

In terms of tissue distribution, in the retina, mainly expressed in the inner retina with strong signals reaching up to the outer plexiform layer (at protein level).

It is found in the nucleus. May be involved in cell cycle regulation by chromatin remodeling. This is RCC1 and BTB domain-containing protein 1 (Rcbtb1) from Mus musculus (Mouse).